Here is a 381-residue protein sequence, read N- to C-terminus: Cytochrome b (381 aa).

The next 4 membrane-spanning stretches (helical) occupy residues 31-51 (FGFL…FLAM), 75-97 (WLLR…IHIF), 112-132 (VWVI…IGYV), and 178-198 (FFSL…VHLA). Residues histidine 81 and histidine 95 each coordinate heme b. The heme b site is built by histidine 182 and histidine 196. Histidine 201 contacts a ubiquinone. Helical transmembrane passes span 224–244 (FIVK…IFVY), 288–308 (LGGV…PWIH), 320–340 (LYRL…WIGG), and 347–367 (YVII…ILLP).

This sequence belongs to the cytochrome b family. As to quaternary structure, the main subunits of complex b-c1 are: cytochrome b, cytochrome c1 and the Rieske protein. Heme b serves as cofactor.

The protein resides in the mitochondrion inner membrane. In terms of biological role, component of the ubiquinol-cytochrome c reductase complex (complex III or cytochrome b-c1 complex) that is part of the mitochondrial respiratory chain. The b-c1 complex mediates electron transfer from ubiquinol to cytochrome c. Contributes to the generation of a proton gradient across the mitochondrial membrane that is then used for ATP synthesis. This Chondrus crispus (Carrageen Irish moss) protein is Cytochrome b (MT-CYB).